We begin with the raw amino-acid sequence, 432 residues long: Cytochrome c biogenesis protein CcsB (432 aa).

Helical transmembrane passes span 18-38 (LRLAIVLLLLIALASAVGTGI), 76-96 (SGWFLALLAWLGLALILCSWR), and 166-186 (VGPLLVHTGLVLLMLGAAWGA).

It belongs to the Ccs1/CcsB family. May interact with CcsA.

The protein resides in the cellular thylakoid membrane. In terms of biological role, required during biogenesis of c-type cytochromes (cytochrome c6 and cytochrome f) at the step of heme attachment. This Synechococcus sp. (strain CC9605) protein is Cytochrome c biogenesis protein CcsB.